The sequence spans 443 residues: Structure-specific endonuclease subunit SLX1 homolog (443 aa).

The disordered stretch occupies residues 1-27 (METFILSSDSDDDSGPPPSKRRTIEGI). The GIY-YIG domain occupies 171-258 (EFYGVYCLIS…PLVSKSLKEK (88 aa)). The SLX1-type zinc-finger motif lies at 340–395 (CRICGKDIEKLWSLVRCISATCPSHFHSKCLSENGLKLKNEHVDHVYPLKANCPTC).

This sequence belongs to the SLX1 family. Forms a heterodimer with him-18/slx-4. It depends on a divalent metal cation as a cofactor.

It is found in the nucleus. Its function is as follows. Catalytic subunit of a heterodimeric structure-specific endonuclease that resolves DNA secondary structures generated during DNA repair and recombination. Has endonuclease activity towards branched DNA substrates, introducing single-strand cuts in duplex DNA close to junctions with ss-DNA (Potential). Has a preference for replication forks over 5' flap structures or Holliday junctions and shows much lower activity toward 3' flap structures. Required for proper crossover distribution through inhibition of crossover formation at the central region of chromosomes. This is Structure-specific endonuclease subunit SLX1 homolog from Caenorhabditis elegans.